A 150-amino-acid chain; its full sequence is S-protein homolog 24 (150 aa).

N-linked (GlcNAc...) asparagine glycosylation occurs at asparagine 122.

It belongs to the plant self-incompatibility (S1) protein family.

Its subcellular location is the secreted. The chain is S-protein homolog 24 from Arabidopsis thaliana (Mouse-ear cress).